The chain runs to 122 residues: Large ribosomal subunit protein uL14 (122 aa).

It belongs to the universal ribosomal protein uL14 family. Part of the 50S ribosomal subunit. Forms a cluster with proteins L3 and L19. In the 70S ribosome, L14 and L19 interact and together make contacts with the 16S rRNA in bridges B5 and B8.

Binds to 23S rRNA. Forms part of two intersubunit bridges in the 70S ribosome. This chain is Large ribosomal subunit protein uL14, found in Thermomicrobium roseum (strain ATCC 27502 / DSM 5159 / P-2).